The following is a 256-amino-acid chain: Ribosomal RNA small subunit methyltransferase J (256 aa).

S-adenosyl-L-methionine-binding positions include 104–105 (RD), 120–121 (ER), 156–157 (SS), and Asp-174.

This sequence belongs to the methyltransferase superfamily. RsmJ family.

The protein localises to the cytoplasm. It catalyses the reaction guanosine(1516) in 16S rRNA + S-adenosyl-L-methionine = N(2)-methylguanosine(1516) in 16S rRNA + S-adenosyl-L-homocysteine + H(+). Its function is as follows. Specifically methylates the guanosine in position 1516 of 16S rRNA. This chain is Ribosomal RNA small subunit methyltransferase J, found in Yersinia pseudotuberculosis serotype O:1b (strain IP 31758).